Here is a 378-residue protein sequence, read N- to C-terminus: Mitogen-activated protein kinase mpkC (378 aa).

A Protein kinase domain is found at 20 to 300; it reads YVNPQPIGMG…AQDALRYPYL (281 aa). ATP is bound by residues 26–34 and Lys49; that span reads IGMGSFGLV. Catalysis depends on Asp141, which acts as the Proton acceptor. Thr171 carries the post-translational modification Phosphothreonine. The TXY signature appears at 171–173; the sequence is TGY. Tyr173 bears the Phosphotyrosine mark.

Belongs to the protein kinase superfamily. Ser/Thr protein kinase family. MAP kinase subfamily. HOG1 sub-subfamily. As to quaternary structure, interacts with sakA upon osmotic and cell wall stresses. Mg(2+) serves as cofactor. In terms of processing, dually phosphorylated on Thr-171 and Tyr-173, which activates the enzyme.

The protein resides in the cytoplasm. Its subcellular location is the nucleus. The enzyme catalyses L-seryl-[protein] + ATP = O-phospho-L-seryl-[protein] + ADP + H(+). It carries out the reaction L-threonyl-[protein] + ATP = O-phospho-L-threonyl-[protein] + ADP + H(+). Activated by tyrosine and threonine phosphorylation. Mitogen-activated protein kinase; part of an osmotic and general signal pathways involved in regulation of the response to the cell wall damage, oxidative stress, drug resistance, and establishment of infection. Required for growth on media where sorbitol or mannitol is the sole carbon source. With sakA, plays a redundant or cooperative role in the conidial stress resistance. Also plays a supportive role in osmotic stress adaptation when sakA is deficient. Involved in paradoxical growth, the cell wall integrity (CWI) pathway and biofilm formation. Acts by modulating sakA activity upon exposure to several types o stresses and during cell wall biosynthesis. Also collaborates with sakA to allow ful virulence in a neutropenic murine model of invasive pulmonary aspergillosis. MpkC and sakA have both independent and collaborative functions during the transcriptional response to transient osmotic stress, and mpkC plays a major role in the modulation of the response to DNA metabolism while activating mitochondrial functions and cation transport. The protein is Mitogen-activated protein kinase mpkC (mpkC) of Aspergillus fumigatus (strain ATCC MYA-4609 / CBS 101355 / FGSC A1100 / Af293) (Neosartorya fumigata).